We begin with the raw amino-acid sequence, 331 residues long: DNA-directed RNA polymerase subunit alpha (331 aa).

Residues 1-226 (MLIAQRPTLT…ELFGLCRELN (226 aa)) form an alpha N-terminal domain (alpha-NTD) region. The interval 243–331 (TNPEMAVPIE…GGTFFSPEDE (89 aa)) is alpha C-terminal domain (alpha-CTD).

It belongs to the RNA polymerase alpha chain family. As to quaternary structure, homodimer. The RNAP catalytic core consists of 2 alpha, 1 beta, 1 beta' and 1 omega subunit. When a sigma factor is associated with the core the holoenzyme is formed, which can initiate transcription.

It catalyses the reaction RNA(n) + a ribonucleoside 5'-triphosphate = RNA(n+1) + diphosphate. Functionally, DNA-dependent RNA polymerase catalyzes the transcription of DNA into RNA using the four ribonucleoside triphosphates as substrates. The polypeptide is DNA-directed RNA polymerase subunit alpha (Bifidobacterium longum (strain NCC 2705)).